The following is an 84-amino-acid chain: Small ribosomal subunit protein bS20 (84 aa).

Belongs to the bacterial ribosomal protein bS20 family.

Its function is as follows. Binds directly to 16S ribosomal RNA. The polypeptide is Small ribosomal subunit protein bS20 (Limosilactobacillus fermentum (strain NBRC 3956 / LMG 18251) (Lactobacillus fermentum)).